The following is a 751-amino-acid chain: Large T antigen (751 aa).

The residue at position 1 (M1) is an N-acetylmethionine; by host. A J domain is found at 12-75 (ALISLLDLEP…LYRVRLLLGP (64 aa)). The interval 130-134 (LTCQE) is binding to host RB1 protein and transforming activity. The segment covering 133 to 143 (QEELSSSEDEF) has biased composition (acidic residues). The tract at residues 133 to 260 (QEELSSSEDE…PKKPPPTVSP (128 aa)) is disordered. Over residues 155–165 (VSISSDSSSSS) the composition is skewed to low complexity. Positions 219-232 (RESQSTFGSYFNST) are enriched in polar residues. S245 is modified (phosphoserine; by host). Position 249 is a phosphothreonine; by host (T249). The short motif at 251 to 257 (PKKPPPT) is the Nuclear localization signal element. Positions 264-380 (PTILRGFLSH…KENKPGLYHF (117 aa)) form a DNA-binding region, T-ag OBD. The T-ag D1-type zinc-finger motif lies at 389 to 483 (VKQIDWNFLT…RRLKVLESTR (95 aa)). Residues C426, C429, H439, and H443 each coordinate Zn(2+). Residues 522 to 682 (DFEMMLLDIL…DFLAKSLEEN (161 aa)) enclose the SF3 helicase domain. ATP is bound at residue 548–555 (GPVNSGKT).

Forms homohexamers in the presence of ATP. Interacts with host HDAC1. Interacts (via LXCXE domain) with host RB1; the interaction induces the aberrant dissociation of RB1-E2F1 complex thereby disrupting RB1's activity. Interacts (via LXCXE domain) with host pRB-related proteins RBL1 and RBL2. Interacts (via C-terminus) with host TOP1 and POLA1 allowing DNA replication. Interacts with host preinitiation complex components TBP, TFIIA and TFIID to regulate transcription initiation. Mg(2+) is required as a cofactor. In terms of processing, phosphorylated on both serine and threonine residues. Small t antigen inhibits the dephosphorylation by the AC form of PP2A. Post-translationally, O-Glycosylated near the C-terminal region. Acetylated by CBP in a TP53-dependent manner.

Its subcellular location is the host nucleus. It catalyses the reaction Couples ATP hydrolysis with the unwinding of duplex DNA by translocating in the 3'-5' direction.. It carries out the reaction ATP + H2O = ADP + phosphate + H(+). Isoform large T antigen is a key early protein essential for both driving viral replication and inducing cellular transformation. Plays a role in viral genome replication by driving entry of quiescent cells into the cell cycle and by autoregulating the synthesis of viral early mRNA. Displays highly oncogenic activities by corrupting the host cellular checkpoint mechanisms that guard cell division and the transcription, replication, and repair of DNA. Participates in the modulation of cellular gene expression preceeding viral DNA replication. This step involves binding to host key cell cycle regulators retinoblastoma protein RB1/pRb and TP53. Induces the disassembly of host E2F1 transcription factors from RB1, thus promoting transcriptional activation of E2F1-regulated S-phase genes. Inhibits host TP53 binding to DNA, abrogating the ability of TP53 to stimulate gene expression. Plays the role of a TFIID-associated factor (TAF) in transcription initiation for all three RNA polymerases, by stabilizing the TBP-TFIIA complex on promoters. Initiates viral DNA replication and unwinding via interactions with the viral origin of replication. Binds two adjacent sites in the SV40 origin. The replication fork movement is facilitated by Large T antigen helicase activity. Has processive 3'-5' DNA helicase activity which requires a short 3' single-stranded region and ATP. Activates the transcription of viral late mRNA, through host TBP and TFIIA stabilization. Interferes with histone deacetylation mediated by HDAC1, leading to activation of transcription. This Mesocricetus auratus (Golden hamster) protein is Large T antigen.